A 382-amino-acid polypeptide reads, in one-letter code: Acetyltransferase eriL (382 aa).

Helical transmembrane passes span 5–25 (LQPLPGGLQVAVQACLFLGAV), 33–53 (ALLFPPVLAMSLYMLLYTTTG), 59–79 (IVTWSLITTSLLQGSDILLIN), 146–166 (TLFYFVVLDLVHTFIVLSPVF), 192–212 (LWSYMSFGYSAASVVLVALGV), and 335–355 (GYMWTFLWFVFTLPHWMDPQF).

It belongs to the wax synthase family.

The protein localises to the membrane. The catalysed reaction is cyathatriol + acetyl-CoA = 11-O-acetylcyathatriol + CoA. It catalyses the reaction cyathin A3 + acetyl-CoA = 11-O-acetylcyathin A3 + CoA. Its pathway is secondary metabolite biosynthesis. Functionally, acetyltransferase; part of the gene cluster that mediates the biosynthesis of erinacines, cyathane-xylosides that show unique biological activities, including leishmanicidal activity, stimulating activity for nerve growth-factor synthesis, and agonistic activity toward the kappa opioid receptor. Within the pathway, eriL converts cyathatriol into 11-O-acetyl-cyathatriol. EriL is also able to acetylate cyathin A3 to produce 11-O-acetylcyathin A3. The first step of the erinacines biosynthesis pathway is catalyzed by the geranylgeranyl diphosphate (GGPP) synthase eriE via conversion of farnesyl pyrophosphate and isopentyl pyrophosphate into geranylgeranyl pyrophosphate (GGPP). GGPP is then substrate of the diterpene cyclase eriG for the production of cyatha-3,12-diene. The cytochrome P450 monooxygenase eriI then hydroxylates cyatha-3,12-diene at C-14 of the seven-membered ring to produce erinacol, which is further hydroxylated at C-15 by the cytochrome P450 monooxygenase eriC to yield cyathadiol. The cytochrome P450 monooxygenase eriA then catalyzes C-11 hydroxylation in the presence of the short chain dehydrogenase/reductase (SDR) eriH, which leads to the production of cyathatriol. The acetyltransferase eriL converts cyathatriol into 11-O-acetyl-cyathatriol. The SDR eriH catalyzes further oxidation of 11-O-acetyl-cyathatriol into 1-O-acetylcyathin A3. Finally, the glycosyl transferase eriJ tranfers xylose from UDP-xylose onto C-14 of 11-O-acetyl-cyathatriol to form eracine Q. EriJ is also able to convert 11-O-acetyl-cyathatriol to eracine Q2 by using UDP-D-glucose as cosubstrate, but at a lower rate. The chain is Acetyltransferase eriL from Hericium erinaceus (Lion's mane mushroom).